The chain runs to 129 residues: Urease subunit beta (129 aa).

The protein belongs to the urease beta subunit family. Heterotrimer of UreA (gamma), UreB (beta) and UreC (alpha) subunits. Three heterotrimers associate to form the active enzyme.

The protein localises to the cytoplasm. The enzyme catalyses urea + 2 H2O + H(+) = hydrogencarbonate + 2 NH4(+). The protein operates within nitrogen metabolism; urea degradation; CO(2) and NH(3) from urea (urease route): step 1/1. The sequence is that of Urease subunit beta from Photorhabdus laumondii subsp. laumondii (strain DSM 15139 / CIP 105565 / TT01) (Photorhabdus luminescens subsp. laumondii).